Here is a 1047-residue protein sequence, read N- to C-terminus: Helicase-like transcription factor CHR27 (1047 aa).

The span at 1-11 (MDSAIEISSGS) shows a compositional bias: low complexity. Disordered regions lie at residues 1–89 (MDSA…SGSG), 103–130 (RTLP…SGSR), and 145–174 (KRTL…GSRF). Polar residues-rich tracts occupy residues 52 to 88 (TNQA…SSGS) and 118 to 128 (SGTNNISNASG). A Helicase ATP-binding domain is found at 296 to 597 (ETSSFNCPGG…YSYFRFLRYD (302 aa)). Position 309-316 (309-316 (DDQGLGKT)) interacts with ATP. Disordered stretches follow at residues 349-407 (ADDE…TRAF) and 511-533 (VGAS…SEPD). A compositionally biased stretch (basic and acidic residues) spans 354–368 (DNAKHESGSHVKPEL). The segment covering 370–379 (VSSNSETSVL) has biased composition (polar residues). Positions 385–400 (DENDSSDMEKAEDEEA) are enriched in acidic residues. The span at 511 to 523 (VGASKKSKRRGRK) shows a compositional bias: basic residues. Residues 751 to 790 (CYECNEPPEKPVVTLCGHIFCYECVLEYITGDENTCPVPR) form an RING-type; degenerate zinc finger. Positions 851–868 (QPDSPNSAQHGQMPSSSR) are enriched in polar residues. Residues 851-873 (QPDSPNSAQHGQMPSSSRPYDDD) form a disordered region. In terms of domain architecture, Helicase C-terminal spans 887–1042 (SPSQGAVKTI…ATRLTVDDLK (156 aa)).

The protein belongs to the SNF2/RAD54 helicase family. RAD16 subfamily. In terms of assembly, interacts with SUVR2. Interacts with itself.

The protein resides in the nucleus. Probable helicase-like transcription factor involved in transcriptional gene silencing. Associates with SUVR2 and contributes to transcriptional gene silencing at RNA-directed DNA methylation (RdDM) target loci but also at RdDM-independent target loci. May be involved in nucleosome positioning to form ordered nucleosome arrays on chromatin. Associates with SUVR2 and functions redundantly with FRG2. Required for the efficient methylation of a broad range of RdDM target loci. This is Helicase-like transcription factor CHR27 from Arabidopsis thaliana (Mouse-ear cress).